Reading from the N-terminus, the 223-residue chain is 7-cyano-7-deazaguanine synthase (223 aa).

An ATP-binding site is contributed by Ile11–Ala21. Zn(2+) is bound by residues Cys189, Cys197, Cys200, and Cys203.

This sequence belongs to the QueC family. Zn(2+) is required as a cofactor.

The enzyme catalyses 7-carboxy-7-deazaguanine + NH4(+) + ATP = 7-cyano-7-deazaguanine + ADP + phosphate + H2O + H(+). It participates in purine metabolism; 7-cyano-7-deazaguanine biosynthesis. In terms of biological role, catalyzes the ATP-dependent conversion of 7-carboxy-7-deazaguanine (CDG) to 7-cyano-7-deazaguanine (preQ(0)). The protein is 7-cyano-7-deazaguanine synthase of Campylobacter fetus subsp. fetus (strain 82-40).